The chain runs to 132 residues: Chemokine-like protein TAFA-5 (132 aa).

Positions 1–43 are cleaved as a signal peptide; it reads MAPSPRTSSRQDATALPSMSSTFWAFMILASLLIAYCSQLAAG. N-linked (GlcNAc...) asparagine glycosylation is present at asparagine 113.

Belongs to the TAFA family. Expressed in the subcutaneous, brown, epididymal and perirenal adipose tissue (at protein level).

The protein localises to the secreted. Its function is as follows. Acts as a chemokine-like protein by regulating cell proliferation and migration through activation of G protein-coupled receptors (GPCRs), such as S1PR2 and FPR2. Stimulates chemotactic migration of macrophages mediated by the MAPK3/ERK1 and AKT1 pathway. Blocks TNFSF11/RANKL-induced osteoclast formation from macrophages by inhibiting up-regulation of osteoclast fusogenic and differentiation genes. Stimulation of macrophage migration and inhibition of osteoclast formation is mediated through the GPCR FPR2. Acts as an adipokine by negatively regulating vascular smooth muscle cell (VSMC) proliferation and migration in response to platelet-derived growth factor stimulation via GPCR S1PR2 and G protein GNA12/GNA13-transmitted RHOA signaling. Inhibits injury-induced cell proliferation and neointima formation in the femoral arteries. In Mus musculus (Mouse), this protein is Chemokine-like protein TAFA-5 (Tafa5).